The following is a 139-amino-acid chain: Small ribosomal subunit protein bS16 (139 aa).

A disordered region spans residues 84–139 (KGEPAPAPLLQPAEKAARPSFEAIGGEDEGKGEAITQKKKADKRDEAAAESSASEA).

It belongs to the bacterial ribosomal protein bS16 family.

This Streptomyces lividans protein is Small ribosomal subunit protein bS16.